Reading from the N-terminus, the 428-residue chain is MPAIVLIGAQWGDEGKGKATDLLGEQAQWVVRYQGGNNAGHTVVLPDGQDFALHLIPSGILTPGVTNVIGNGVVVDPGVLLDELAGLEARDIDTNRLLISADAHLIMPYHVAIDRVTERYLGKKQIGTTGRGIGPCYQDKIARVGVRVQDVLDEKILRQKVEAALDIKNQILVKVYNRRGLDVDEVVDTVLGQAEKFAGRIADTKLLINQALDRGETVLLEGSQGTLLDVDHGTYPFVTSSNPTSGGACAGSGIGPTRINGVVGILKAYTTRVGAGPFPTELTDDAGENLRKAGGEFGVTTGRSRRTGWFDAVIARYATRVNGITDYFLTKLDVLTGLQTIPVCVAYDVDGERVTEMPMTQTGVHHAVPVYEELPGWWEDVSGARSFEELPANAQAYVKRLEELSGARISAIGVGPGRDQTIVRHTMA.

GTP contacts are provided by residues 12–18 and 40–42; these read GDEGKGK and GHT. D13 functions as the Proton acceptor in the catalytic mechanism. Mg(2+)-binding residues include D13 and G40. IMP contacts are provided by residues 13 to 16, 38 to 41, T129, R143, Q224, T239, and R303; these read DEGK and NAGH. Residue H41 is the Proton donor of the active site. 299 to 305 is a substrate binding site; it reads VTTGRSR. GTP-binding positions include R305, 331 to 333, and 413 to 415; these read KLD and GVG.

The protein belongs to the adenylosuccinate synthetase family. Homodimer. Requires Mg(2+) as cofactor.

The protein resides in the cytoplasm. It carries out the reaction IMP + L-aspartate + GTP = N(6)-(1,2-dicarboxyethyl)-AMP + GDP + phosphate + 2 H(+). It participates in purine metabolism; AMP biosynthesis via de novo pathway; AMP from IMP: step 1/2. Functionally, plays an important role in the de novo pathway of purine nucleotide biosynthesis. Catalyzes the first committed step in the biosynthesis of AMP from IMP. This Saccharopolyspora erythraea (strain ATCC 11635 / DSM 40517 / JCM 4748 / NBRC 13426 / NCIMB 8594 / NRRL 2338) protein is Adenylosuccinate synthetase.